Consider the following 663-residue polypeptide: 4-hydroxy-3-methylbut-2-en-1-yl diphosphate synthase (flavodoxin) (663 aa).

[4Fe-4S] cluster-binding residues include Cys568, Cys571, Cys602, and Glu609.

It belongs to the IspG family. [4Fe-4S] cluster serves as cofactor.

The enzyme catalyses (2E)-4-hydroxy-3-methylbut-2-enyl diphosphate + oxidized [flavodoxin] + H2O + 2 H(+) = 2-C-methyl-D-erythritol 2,4-cyclic diphosphate + reduced [flavodoxin]. It participates in isoprenoid biosynthesis; isopentenyl diphosphate biosynthesis via DXP pathway; isopentenyl diphosphate from 1-deoxy-D-xylulose 5-phosphate: step 5/6. Its function is as follows. Converts 2C-methyl-D-erythritol 2,4-cyclodiphosphate (ME-2,4cPP) into 1-hydroxy-2-methyl-2-(E)-butenyl 4-diphosphate. The polypeptide is 4-hydroxy-3-methylbut-2-en-1-yl diphosphate synthase (flavodoxin) (Leptospira borgpetersenii serovar Hardjo-bovis (strain L550)).